We begin with the raw amino-acid sequence, 425 residues long: Glutamate-1-semialdehyde 2,1-aminomutase (425 aa).

Lys264 is subject to N6-(pyridoxal phosphate)lysine.

This sequence belongs to the class-III pyridoxal-phosphate-dependent aminotransferase family. HemL subfamily. Homodimer. Requires pyridoxal 5'-phosphate as cofactor.

Its subcellular location is the cytoplasm. The enzyme catalyses (S)-4-amino-5-oxopentanoate = 5-aminolevulinate. Its pathway is porphyrin-containing compound metabolism; protoporphyrin-IX biosynthesis; 5-aminolevulinate from L-glutamyl-tRNA(Glu): step 2/2. This is Glutamate-1-semialdehyde 2,1-aminomutase from Campylobacter lari (strain RM2100 / D67 / ATCC BAA-1060).